The chain runs to 361 residues: POU domain, class 3, transcription factor 4 (361 aa).

Disordered stretches follow at residues 99-131 (PHVA…GQPL) and 144-192 (MLEH…PTSD). Residues 119 to 131 (APNSSITNSGQPL) show a composition bias toward polar residues. Over residues 165-183 (VLREPPDHGELGSHHCQDH) the composition is skewed to basic and acidic residues. One can recognise a POU-specific domain in the interval 186 to 260 (EETPTSDELE…LLNKWLEEAD (75 aa)). At Ser265 the chain carries Phosphoserine. The segment at residues 278–337 (KRKKRTSIEVSVKGVLETHFLKCPKPAAQEISSLADSLQLEKEVVRVWFCNRRQKEKRMT) is a DNA-binding region (homeobox). Residues 334–361 (KRMTPPGDQQPHEVYSHTVKTDASCHDL) are disordered. The span at 343–361 (QPHEVYSHTVKTDASCHDL) shows a compositional bias: basic and acidic residues.

The protein belongs to the POU transcription factor family. Class-3 subfamily.

Its subcellular location is the nucleus. Probable transcription factor which exert its primary action widely during early neural development and in a very limited set of neurons in the mature brain. The protein is POU domain, class 3, transcription factor 4 (Pou3f4) of Mesocricetus auratus (Golden hamster).